A 556-amino-acid chain; its full sequence is Genetic interactor of prohibitins 3, mitochondrial (556 aa).

The transit peptide at 1-21 (MLNLCHALRGVRQFSCSVIVK) directs the protein to the mitochondrion. The 193-residue stretch at 113–305 (ESTLNDILNY…LFDLPGYSTS (193 aa)) folds into the CP-type G domain.

The protein belongs to the TRAFAC class YlqF/YawG GTPase family. GEP3 subfamily.

The protein resides in the mitochondrion. Functionally, interacts genetically with prohibitins and thus may be involved in the mitochondrial lipid metabolism. This is Genetic interactor of prohibitins 3, mitochondrial (GEP3) from Saccharomyces cerevisiae (strain YJM789) (Baker's yeast).